Here is a 198-residue protein sequence, read N- to C-terminus: HTH-type transcriptional regulator BetI (198 aa).

The HTH tetR-type domain occupies 8–68 (PLRRRELIDA…ATMRHLLREL (61 aa)). The H-T-H motif DNA-binding region spans 31 to 50 (TVAQIAHEAGVSPALAHHYF).

It functions in the pathway amine and polyamine biosynthesis; betaine biosynthesis via choline pathway [regulation]. Functionally, repressor involved in the biosynthesis of the osmoprotectant glycine betaine. It represses transcription of the choline transporter BetT and the genes of BetAB involved in the synthesis of glycine betaine. This Brucella suis biovar 1 (strain 1330) protein is HTH-type transcriptional regulator BetI.